The primary structure comprises 106 residues: Follitropin subunit beta (106 aa).

6 disulfides stabilise this stretch: Cys-1/Cys-49, Cys-15/Cys-64, Cys-18/Cys-102, Cys-26/Cys-80, Cys-30/Cys-82, and Cys-85/Cys-92. N-linked (GlcNAc...) asparagine glycosylation is found at Asn-5 and Asn-22.

This sequence belongs to the glycoprotein hormones subunit beta family. Heterodimer. The active follitropin is a heterodimer composed of an alpha chain/CGA shared with other hormones and a unique beta chain/FSHB shown here.

It localises to the secreted. Its function is as follows. Together with the alpha chain CGA constitutes follitropin, the follicle-stimulating hormone, and provides its biological specificity to the hormone heterodimer. Binds FSHR, a G protein-coupled receptor, on target cells to activate downstream signaling pathways. Follitropin is involved in follicle development and spermatogenesis in reproductive organs. This Struthio camelus (Common ostrich) protein is Follitropin subunit beta (FSHB).